A 99-amino-acid chain; its full sequence is Sperm protein associated with the nucleus on the X chromosome N4 (99 aa).

Positions 1-10 (MEEPTSSTNE) are enriched in polar residues. Residues 1-99 (MEEPTSSTNE…AGSPQDGGQN (99 aa)) form a disordered region. The span at 11–22 (NKMKSPCESNKR) shows a compositional bias: basic and acidic residues. A compositionally biased stretch (basic residues) spans 23–32 (KVDKKKKNLH). The segment covering 64–78 (SNQLENNQPTESSTD) has biased composition (polar residues).

The protein belongs to the SPAN-X family.

The protein is Sperm protein associated with the nucleus on the X chromosome N4 (SPANXN4) of Homo sapiens (Human).